A 612-amino-acid chain; its full sequence is Dihydroxy-acid dehydratase (612 aa).

D81 is a binding site for Mg(2+). C122 is a [2Fe-2S] cluster binding site. D123 and K124 together coordinate Mg(2+). K124 is subject to N6-carboxylysine. C193 serves as a coordination point for [2Fe-2S] cluster. E489 contacts Mg(2+). S515 (proton acceptor) is an active-site residue.

Belongs to the IlvD/Edd family. As to quaternary structure, homodimer. Requires [2Fe-2S] cluster as cofactor. It depends on Mg(2+) as a cofactor.

It catalyses the reaction (2R)-2,3-dihydroxy-3-methylbutanoate = 3-methyl-2-oxobutanoate + H2O. The enzyme catalyses (2R,3R)-2,3-dihydroxy-3-methylpentanoate = (S)-3-methyl-2-oxopentanoate + H2O. It participates in amino-acid biosynthesis; L-isoleucine biosynthesis; L-isoleucine from 2-oxobutanoate: step 3/4. Its pathway is amino-acid biosynthesis; L-valine biosynthesis; L-valine from pyruvate: step 3/4. In terms of biological role, functions in the biosynthesis of branched-chain amino acids. Catalyzes the dehydration of (2R,3R)-2,3-dihydroxy-3-methylpentanoate (2,3-dihydroxy-3-methylvalerate) into 2-oxo-3-methylpentanoate (2-oxo-3-methylvalerate) and of (2R)-2,3-dihydroxy-3-methylbutanoate (2,3-dihydroxyisovalerate) into 2-oxo-3-methylbutanoate (2-oxoisovalerate), the penultimate precursor to L-isoleucine and L-valine, respectively. The sequence is that of Dihydroxy-acid dehydratase from Stenotrophomonas maltophilia (strain R551-3).